The following is a 264-amino-acid chain: Ribosomal protein L11 methyltransferase (264 aa).

Residues threonine 116, glycine 137, aspartate 159, and asparagine 200 each coordinate S-adenosyl-L-methionine.

Belongs to the methyltransferase superfamily. PrmA family.

The protein localises to the cytoplasm. The catalysed reaction is L-lysyl-[protein] + 3 S-adenosyl-L-methionine = N(6),N(6),N(6)-trimethyl-L-lysyl-[protein] + 3 S-adenosyl-L-homocysteine + 3 H(+). Its function is as follows. Methylates ribosomal protein L11. The protein is Ribosomal protein L11 methyltransferase of Thermotoga petrophila (strain ATCC BAA-488 / DSM 13995 / JCM 10881 / RKU-1).